A 235-amino-acid polypeptide reads, in one-letter code: Aspartate/glutamate leucyltransferase (235 aa).

This sequence belongs to the R-transferase family. Bpt subfamily.

The protein localises to the cytoplasm. It catalyses the reaction N-terminal L-glutamyl-[protein] + L-leucyl-tRNA(Leu) = N-terminal L-leucyl-L-glutamyl-[protein] + tRNA(Leu) + H(+). It carries out the reaction N-terminal L-aspartyl-[protein] + L-leucyl-tRNA(Leu) = N-terminal L-leucyl-L-aspartyl-[protein] + tRNA(Leu) + H(+). Functions in the N-end rule pathway of protein degradation where it conjugates Leu from its aminoacyl-tRNA to the N-termini of proteins containing an N-terminal aspartate or glutamate. The sequence is that of Aspartate/glutamate leucyltransferase from Pseudomonas aeruginosa (strain LESB58).